The sequence spans 209 residues: Small ribosomal subunit protein uS5 (209 aa).

The S5 DRBM domain occupies 48-111 (LEDEVLDINM…DAAKLNITYI (64 aa)).

It belongs to the universal ribosomal protein uS5 family. In terms of assembly, part of the 30S ribosomal subunit. Contacts protein S4.

Its function is as follows. With S4 and S12 plays an important role in translational accuracy. The polypeptide is Small ribosomal subunit protein uS5 (Methanosarcina mazei (strain ATCC BAA-159 / DSM 3647 / Goe1 / Go1 / JCM 11833 / OCM 88) (Methanosarcina frisia)).